The chain runs to 287 residues: Shikimate dehydrogenase (NADP(+)) (287 aa).

Shikimate is bound by residues 20 to 22 (SRS) and threonine 67. The active-site Proton acceptor is the lysine 71. Glutamate 84 contacts NADP(+). Shikimate contacts are provided by asparagine 93 and aspartate 108. NADP(+) is bound by residues 132-136 (GAGGA), 156-161 (NRTAAR), and methionine 226. A shikimate-binding site is contributed by tyrosine 228. An NADP(+)-binding site is contributed by glycine 250.

The protein belongs to the shikimate dehydrogenase family. In terms of assembly, homodimer.

It carries out the reaction shikimate + NADP(+) = 3-dehydroshikimate + NADPH + H(+). It participates in metabolic intermediate biosynthesis; chorismate biosynthesis; chorismate from D-erythrose 4-phosphate and phosphoenolpyruvate: step 4/7. Its function is as follows. Involved in the biosynthesis of the chorismate, which leads to the biosynthesis of aromatic amino acids. Catalyzes the reversible NADPH linked reduction of 3-dehydroshikimate (DHSA) to yield shikimate (SA). This chain is Shikimate dehydrogenase (NADP(+)), found in Bordetella bronchiseptica (strain ATCC BAA-588 / NCTC 13252 / RB50) (Alcaligenes bronchisepticus).